The following is a 140-amino-acid chain: Putative pre-16S rRNA nuclease (140 aa).

It belongs to the YqgF nuclease family.

The protein localises to the cytoplasm. Functionally, could be a nuclease involved in processing of the 5'-end of pre-16S rRNA. The polypeptide is Putative pre-16S rRNA nuclease (Moorella thermoacetica (strain ATCC 39073 / JCM 9320)).